Here is a 37-residue protein sequence, read N- to C-terminus: 24 kDa antigen (37 aa).

The chain is 24 kDa antigen from Plasmodium chabaudi.